The following is a 534-amino-acid chain: NAD(P)H-quinone oxidoreductase chain 4 1 (534 aa).

Transmembrane regions (helical) follow at residues 6–26, 34–54, 87–107, 113–133, 136–156, 169–189, 209–229, 243–263, 277–297, 311–331, 332–352, 376–396, 418–438, and 464–484; these read IPWL…IPLI, IRWY…TAFW, LSMP…LAAW, PKLF…VFAV, LLLF…LISI, FILY…ALAF, ALEL…LPIF, SAPV…YGLI, FAPL…LTAF, ISHM…GMNG, AVLQ…LSGV, FAMF…SGFV, IAIF…LSML, and IFVA…PKLA.

The protein belongs to the complex I subunit 4 family.

It is found in the cellular thylakoid membrane. It carries out the reaction a plastoquinone + NADH + (n+1) H(+)(in) = a plastoquinol + NAD(+) + n H(+)(out). It catalyses the reaction a plastoquinone + NADPH + (n+1) H(+)(in) = a plastoquinol + NADP(+) + n H(+)(out). NDH-1 shuttles electrons from NAD(P)H, via FMN and iron-sulfur (Fe-S) centers, to quinones in the respiratory chain. The immediate electron acceptor for the enzyme in this species is believed to be plastoquinone. Couples the redox reaction to proton translocation (for every two electrons transferred, four hydrogen ions are translocated across the cytoplasmic membrane), and thus conserves the redox energy in a proton gradient. This is NAD(P)H-quinone oxidoreductase chain 4 1 from Picosynechococcus sp. (strain ATCC 27264 / PCC 7002 / PR-6) (Agmenellum quadruplicatum).